Consider the following 826-residue polypeptide: Receptor-like protein 18 (826 aa).

The Extracellular portion of the chain corresponds to Met-1–Trp-780. LRR repeat units follow at residues Val-5–Leu-31, Gln-32–Asn-54, Phe-55–Leu-79, His-81–Leu-103, Ser-104–Leu-127, Ser-128–Asn-150, and Leu-151–Gln-177. Residues Asn-12 and Asn-54 are each glycosylated (N-linked (GlcNAc...) asparagine). N-linked (GlcNAc...) asparagine glycans are attached at residues Asn-102, Asn-126, and Asn-150. One copy of the LRR 8; degenerate repeat lies at Leu-178–Asn-198. N-linked (GlcNAc...) asparagine glycosylation is found at Asn-198, Asn-201, and Asn-219. LRR repeat units follow at residues Leu-199–Leu-223, Asn-225–Ile-247, Pro-248–Ser-271, Leu-273–Leu-294, Asn-296–Asp-318, Leu-319–Ser-343, Phe-345–Asn-368, Pro-382–Gln-405, Gln-406–Leu-429, Pro-430–Ser-452, Gln-455–Ala-478, Phe-479–Ser-500, Glu-501–Ile-524, Ser-525–Glu-550, Gln-552–Phe-570, Pro-571–Asn-594, Leu-637–Leu-661, Lys-662–Leu-685, Arg-686–Leu-709, and Tyr-711–Thr-734. Residue Asn-268 is glycosylated (N-linked (GlcNAc...) asparagine). 4 N-linked (GlcNAc...) asparagine glycosylation sites follow: Asn-312, Asn-331, Asn-362, and Asn-389. N-linked (GlcNAc...) asparagine glycosylation is found at Asn-436, Asn-439, Asn-467, and Asn-498. N-linked (GlcNAc...) asparagine glycosylation occurs at Asn-538. Asn-584 and Asn-594 each carry an N-linked (GlcNAc...) asparagine glycan. Asn-668 is a glycosylation site (N-linked (GlcNAc...) asparagine). Asn-716 and Asn-736 each carry an N-linked (GlcNAc...) asparagine glycan. The helical transmembrane segment at Ile-781–Leu-801 threads the bilayer. Residues Val-802–Arg-826 are Cytoplasmic-facing.

This sequence belongs to the RLP family.

It is found in the cell membrane. In Arabidopsis thaliana (Mouse-ear cress), this protein is Receptor-like protein 18.